The sequence spans 1458 residues: Secretory phospholipase A2 receptor (1458 aa).

The first 23 residues, 1–23, serve as a signal peptide directing secretion; that stretch reads MLLSLLLLLLLGAPRRCTEGAAA. Residues 24-1393 are Extracellular-facing; sequence ALSPERVLKW…EHPGKGPSHS (1370 aa). Intrachain disulfides connect Cys-49–Cys-62, Cys-87–Cys-104, Cys-176–Cys-202, Cys-190–Cys-217, Cys-258–Cys-352, Cys-328–Cys-344, Cys-404–Cys-499, Cys-476–Cys-491, Cys-615–Cys-632, Cys-697–Cys-794, Cys-772–Cys-786, Cys-838–Cys-935, Cys-912–Cys-927, Cys-1065–Cys-1085, Cys-1207–Cys-1221, Cys-1278–Cys-1373, and Cys-1350–Cys-1365. Residues 49–113 enclose the Ricin B-type lectin domain; the sequence is CIQAGKSVLT…CDSTHVSLRW (65 aa). A glycan (N-linked (GlcNAc...) asparagine) is linked at Asn-91. In terms of domain architecture, Fibronectin type-II spans 171-219; that stretch reads AHGTPCMFPFQYNHQWHHECTREGRQDDSLWCATTSRYERDEKWGFCPD. C-type lectin domains are found at residues 227–356, 374–502, 511–645, 660–798, 815–939, 954–1098, 1117–1231, and 1243–1376; these read CDAV…KKYL, TDCE…CKKP, SGCQ…KQPV, HPCY…KIPR, LFHQ…KRKT, GTCP…EKIQ, LEYG…AICH, and ELCS…CKMK. Asn-408, Asn-431, and Asn-452 each carry an N-linked (GlcNAc...) asparagine glycan. The helical transmembrane segment at 1394-1416 threads the bilayer; sequence IVPLAVALTLVVILAIITLSFYI. The Cytoplasmic segment spans residues 1417–1458; it reads YKQNKGFFRRLAGVGNSYYPTTNFSTIHLEENILISDLEKND. Positions 1432-1438 match the Endocytosis signal motif; the sequence is NSYYPTT.

Interacts with sPLA2-IB/PLA2G1B; this interaction mediates intracellular signaling as well as clearance of extracellular sPLA2-IB/PLA2G1B via endocytotic pathway. Interacts with sPLA2-X/PLA2G10; this interaction mediates sPLA2-X/PLA2G10 clearance and inactivation. Post-translationally, the secretory phospholipase A2 receptor form may be produced by the action of metalloproteinases. It contains all extracellular domains and only lacks transmembrane and cytosolic regions. It is however unclear whether this form is produced by proteolytic cleavage as suggested by some experiments, or by alternative splicing. Lung, skeletal muscle, brain, kidney and heart.

Its subcellular location is the cell membrane. It is found in the secreted. Receptor for secretory phospholipase A2 (sPLA2). Also able to bind to snake PA2-like toxins. Although its precise function remains unclear, binding of sPLA2 to its receptor participates in both positive and negative regulation of sPLA2 functions as well as clearance of sPLA2. Binding of sPLA2-IB/PLA2G1B induces various effects depending on the cell type, such as activation of the mitogen-activated protein kinase (MAPK) cascade to induce cell proliferation, the production of lipid mediators, selective release of arachidonic acid in bone marrow-derived mast cells. In neutrophils, binding of sPLA2-IB/PLA2G1B can activate p38 MAPK to stimulate elastase release and cell adhesion. May be involved in responses in pro-inflammatory cytokine productions during endotoxic shock. Also has endocytic properties and rapidly internalizes sPLA2 ligands, which is particularly important for the clearance of extracellular sPLA2s to protect their potent enzymatic activities. The soluble secretory phospholipase A2 receptor form is circulating and acts as a negative regulator of sPLA2 functions by blocking the biological functions of sPLA2-IB/PLA2G1B and sPLA2-X/PLA2G10. This Oryctolagus cuniculus (Rabbit) protein is Secretory phospholipase A2 receptor (PLA2R1).